Here is a 930-residue protein sequence, read N- to C-terminus: Translation initiation factor IF-2 (930 aa).

The segment at Gly-29–Ala-316 is disordered. The segment covering Arg-81–Ala-120 has biased composition (pro residues). Residues Ala-121–Ala-135 are compositionally biased toward low complexity. Composition is skewed to pro residues over residues Arg-136 to Pro-155 and Pro-180 to Gly-191. The segment covering Pro-192–Arg-204 has biased composition (gly residues). Residues Gly-228–Thr-240 show a composition bias toward pro residues. The span at Pro-241–Gly-301 shows a compositional bias: gly residues. Residues Lys-305 to Lys-314 show a composition bias toward basic residues. In terms of domain architecture, tr-type G spans Ile-426 to Asp-598. Positions Gly-435–Thr-442 are G1. Gly-435–Thr-442 provides a ligand contact to GTP. Residues Gly-460–His-464 form a G2 region. Residues Asp-485–Gly-488 are G3. GTP is bound by residues Asp-485 to His-489 and Asn-539 to Asp-542. The segment at Asn-539–Asp-542 is G4. The G5 stretch occupies residues Ser-575 to Lys-577.

This sequence belongs to the TRAFAC class translation factor GTPase superfamily. Classic translation factor GTPase family. IF-2 subfamily.

It localises to the cytoplasm. One of the essential components for the initiation of protein synthesis. Protects formylmethionyl-tRNA from spontaneous hydrolysis and promotes its binding to the 30S ribosomal subunits. Also involved in the hydrolysis of GTP during the formation of the 70S ribosomal complex. In Mycolicibacterium vanbaalenii (strain DSM 7251 / JCM 13017 / BCRC 16820 / KCTC 9966 / NRRL B-24157 / PYR-1) (Mycobacterium vanbaalenii), this protein is Translation initiation factor IF-2.